A 1040-amino-acid chain; its full sequence is DNA mismatch repair protein MutS (1040 aa).

Polar residues predominate over residues 1-10 (MPVKPSAQNN). Disordered stretches follow at residues 1-22 (MPVKPSAQNNSPSKPTSKSVPV) and 130-157 (ATGTDNANNPSNAPTMGDKQKKDKSKST). Positions 11–22 (SPSKPTSKSVPV) are enriched in low complexity. The span at 130 to 143 (ATGTDNANNPSNAP) shows a compositional bias: polar residues. An ATP-binding site is contributed by 759-766 (GPNMGGKS).

It belongs to the DNA mismatch repair MutS family.

This protein is involved in the repair of mismatches in DNA. It is possible that it carries out the mismatch recognition step. This protein has a weak ATPase activity. The chain is DNA mismatch repair protein MutS from Psychrobacter cryohalolentis (strain ATCC BAA-1226 / DSM 17306 / VKM B-2378 / K5).